We begin with the raw amino-acid sequence, 142 residues long: Large ribosomal subunit protein uL11 (142 aa).

The protein belongs to the universal ribosomal protein uL11 family. In terms of assembly, part of the ribosomal stalk of the 50S ribosomal subunit. Interacts with L10 and the large rRNA to form the base of the stalk. L10 forms an elongated spine to which L12 dimers bind in a sequential fashion forming a multimeric L10(L12)X complex. One or more lysine residues are methylated.

In terms of biological role, forms part of the ribosomal stalk which helps the ribosome interact with GTP-bound translation factors. The polypeptide is Large ribosomal subunit protein uL11 (Nitrobacter winogradskyi (strain ATCC 25391 / DSM 10237 / CIP 104748 / NCIMB 11846 / Nb-255)).